The following is a 603-amino-acid chain: UvrABC system protein C (603 aa).

The region spanning 13–92 (NGPGVYLMKD…IRKHKPRYNI (80 aa)) is the GIY-YIG domain. Residues 202-237 (NDLLQKIKEQMAAASERQEYELAARLRDRMFAIQAT) form the UVR domain.

This sequence belongs to the UvrC family. As to quaternary structure, interacts with UvrB in an incision complex.

The protein localises to the cytoplasm. Its function is as follows. The UvrABC repair system catalyzes the recognition and processing of DNA lesions. UvrC both incises the 5' and 3' sides of the lesion. The N-terminal half is responsible for the 3' incision and the C-terminal half is responsible for the 5' incision. The sequence is that of UvrABC system protein C from Desulfatibacillum aliphaticivorans.